We begin with the raw amino-acid sequence, 414 residues long: Glutamyl-tRNA reductase (414 aa).

Residues 49 to 52 (TCNR), S108, 113 to 115 (EPQ), and Q119 each bind substrate. The active-site Nucleophile is C50. 188–193 (GAGQTG) lines the NADP(+) pocket.

It belongs to the glutamyl-tRNA reductase family. As to quaternary structure, homodimer.

It catalyses the reaction (S)-4-amino-5-oxopentanoate + tRNA(Glu) + NADP(+) = L-glutamyl-tRNA(Glu) + NADPH + H(+). The protein operates within porphyrin-containing compound metabolism; protoporphyrin-IX biosynthesis; 5-aminolevulinate from L-glutamyl-tRNA(Glu): step 1/2. Its function is as follows. Catalyzes the NADPH-dependent reduction of glutamyl-tRNA(Glu) to glutamate 1-semialdehyde (GSA). The protein is Glutamyl-tRNA reductase of Francisella tularensis subsp. tularensis (strain WY96-3418).